We begin with the raw amino-acid sequence, 98 residues long: Small ribosomal subunit protein bS18 (98 aa).

This sequence belongs to the bacterial ribosomal protein bS18 family. In terms of assembly, part of the 30S ribosomal subunit. Forms a tight heterodimer with protein bS6.

Binds as a heterodimer with protein bS6 to the central domain of the 16S rRNA, where it helps stabilize the platform of the 30S subunit. In Flavobacterium psychrophilum (strain ATCC 49511 / DSM 21280 / CIP 103535 / JIP02/86), this protein is Small ribosomal subunit protein bS18.